A 122-amino-acid chain; its full sequence is Holo-[acyl-carrier-protein] synthase (122 aa).

Asp-8 and Glu-56 together coordinate Mg(2+).

This sequence belongs to the P-Pant transferase superfamily. AcpS family. Requires Mg(2+) as cofactor.

Its subcellular location is the cytoplasm. The catalysed reaction is apo-[ACP] + CoA = holo-[ACP] + adenosine 3',5'-bisphosphate + H(+). Functionally, transfers the 4'-phosphopantetheine moiety from coenzyme A to a Ser of acyl-carrier-protein. In Streptomyces griseus subsp. griseus (strain JCM 4626 / CBS 651.72 / NBRC 13350 / KCC S-0626 / ISP 5235), this protein is Holo-[acyl-carrier-protein] synthase.